We begin with the raw amino-acid sequence, 51 residues long: Large ribosomal subunit protein eL39 (51 aa).

The segment at 32-51 is disordered; sequence KRRVTRSPARRHWRRQKLKA.

It belongs to the eukaryotic ribosomal protein eL39 family.

The polypeptide is Large ribosomal subunit protein eL39 (Pyrobaculum calidifontis (strain DSM 21063 / JCM 11548 / VA1)).